The primary structure comprises 417 residues: MTVAETRARNLSIPAPSQITRPALEGVKETMVLNMGPHHPSTHGVLRLVVELDGETVVDVAPDIGYLHTGIEKTMESKTYQKAVVLTDRTDYLAPLSNNLSYVLAVEKLLGCEVPERATVARVLLVELQRIASHLVWLGTHALDLAAMSVFLYGFREREQILDIFELVSGARMMTSYFRVGGLAYDLPIEFDAAVEAFLAIMPGRIDEYEALLTDNPLWIERTQGIGAIDSEAAIALGLTGPGLRATGVAWDLRKTMPYCGYETYSFAVPTATHGDIYDRYLVRMAEMRESVSICRQALQRLRDIGPGPYMTLDRKIAPPPKSEITQSMEALIHHFKLWTEGFKPPRGDALAAVESPRGELATYIVSDGSAKPYRVHFRAPSFVNLQSLPHMARGHLVADLVALIASLDPVLGEVDR.

This sequence belongs to the complex I 49 kDa subunit family. As to quaternary structure, NDH-1 is composed of 14 different subunits. Subunits NuoB, C, D, E, F, and G constitute the peripheral sector of the complex.

It is found in the cell membrane. The enzyme catalyses a quinone + NADH + 5 H(+)(in) = a quinol + NAD(+) + 4 H(+)(out). NDH-1 shuttles electrons from NADH, via FMN and iron-sulfur (Fe-S) centers, to quinones in the respiratory chain. The immediate electron acceptor for the enzyme in this species is believed to be ubiquinone. Couples the redox reaction to proton translocation (for every two electrons transferred, four hydrogen ions are translocated across the cytoplasmic membrane), and thus conserves the redox energy in a proton gradient. This chain is NADH-quinone oxidoreductase subunit D 1, found in Roseiflexus castenholzii (strain DSM 13941 / HLO8).